Reading from the N-terminus, the 549-residue chain is Dicarboxylate transporter 2.2, chloroplastic (549 aa).

A chloroplast-targeting transit peptide spans 1–54 (MESLALRSISLSASYLSLHRSSSKSFALLPPSISVHTSPTLRSLSISSPRFTLR). Residues 57 to 79 (ASSLPEEQNKPQPPPPSPPQPQG) are disordered. A compositionally biased stretch (pro residues) spans 67–77 (PQPPPPSPPQP). 12 helical membrane-spanning segments follow: residues 79–99 (GAKL…RFLI), 115–135 (IFLF…AWAF), 151–171 (TAFA…FFFA), 220–240 (AGGV…SYPG), 247–267 (LGSF…AILL), 294–314 (WFKV…LIIY), 344–364 (NEWI…FGEA), 365–385 (IGIA…LLGV), 403–423 (WFAV…VAWM), 436–456 (LTWP…HYLF), 470–490 (FLAM…CLAF), and 523–543 (VGFV…SFWW).

Belongs to the SLC13A/DASS transporter (TC 2.A.47) family. DIT1 subfamily. In terms of tissue distribution, expressed in roots, rosette and cauline leaves, stems, flowers and siliques.

The protein localises to the plastid. Its subcellular location is the chloroplast inner membrane. May be involved in the transport of dicarboxylate compounds. The protein is Dicarboxylate transporter 2.2, chloroplastic (DIT2-2) of Arabidopsis thaliana (Mouse-ear cress).